Here is a 171-residue protein sequence, read N- to C-terminus: Translationally-controlled tumor protein homolog (171 aa).

One can recognise a TCTP domain in the interval 1–171 (MIIYKDIITG…FKDGLEIEKC (171 aa)).

Belongs to the TCTP family.

The protein localises to the cytoplasm. In terms of biological role, involved in calcium binding and microtubule stabilization. This is Translationally-controlled tumor protein homolog (tpt1) from Labeo rohita (Indian major carp).